The following is a 102-amino-acid chain: RNA-binding protein Hfq (102 aa).

The 60-residue stretch at 9-68 (DPFLNALRRERVPVSIYLVNGIKLQGQIESFDQFVILLKNTVSQMVYKHAISTVVPSRPV) folds into the Sm domain. The disordered stretch occupies residues 63-102 (VPSRPVSHHSNNASGGTSSNYHHGSSAQNTSAQQDSEETE). Residues 70-96 (HHSNNASGGTSSNYHHGSSAQNTSAQQ) show a composition bias toward polar residues.

It belongs to the Hfq family. In terms of assembly, homohexamer.

RNA chaperone that binds small regulatory RNA (sRNAs) and mRNAs to facilitate mRNA translational regulation in response to envelope stress, environmental stress and changes in metabolite concentrations. Also binds with high specificity to tRNAs. In Shigella boydii serotype 18 (strain CDC 3083-94 / BS512), this protein is RNA-binding protein Hfq.